The primary structure comprises 317 residues: MAGLRIIFMGTPEFACPTLRKLIERGEEVIAVVTQPDRPKGRGQKLVPPPVKALAQEHDIPVLQPLKVRTPESVDEIRRLAPDLIVVVAFGQILPQSLLDIPKHGCINIHASLLPRYRGAAPLNWCLINGETETGITTMMMDAGLDTGDMLVKRAIPIGPDEDAQSLHDRLSQLGAETIDETLDLLLAGKLVREKQDDSLTCYAPMLKKEDGLVDWTREPVQVKNQVRGFTPWPGAYTFLDGKTLKLYRVAVAGETGEPGEILRVGREGILVGCGSGSILIQELQLEGRKRLPTAEFLAGFRLEPGTRLGEAGSVEH.

Residue 112-115 (SLLP) participates in (6S)-5,6,7,8-tetrahydrofolate binding.

The protein belongs to the Fmt family.

The catalysed reaction is L-methionyl-tRNA(fMet) + (6R)-10-formyltetrahydrofolate = N-formyl-L-methionyl-tRNA(fMet) + (6S)-5,6,7,8-tetrahydrofolate + H(+). Its function is as follows. Attaches a formyl group to the free amino group of methionyl-tRNA(fMet). The formyl group appears to play a dual role in the initiator identity of N-formylmethionyl-tRNA by promoting its recognition by IF2 and preventing the misappropriation of this tRNA by the elongation apparatus. This Geobacter sulfurreducens (strain ATCC 51573 / DSM 12127 / PCA) protein is Methionyl-tRNA formyltransferase.